Here is a 36-residue protein sequence, read N- to C-terminus: Photosystem II reaction center protein X (36 aa).

The chain crosses the membrane as a helical span at residues 9 to 29 (LWSIFWGGVVVALGAAALTAI).

This sequence belongs to the PsbX family. Type 1 subfamily. PSII is composed of 1 copy each of membrane proteins PsbA, PsbB, PsbC, PsbD, PsbE, PsbF, PsbH, PsbI, PsbJ, PsbK, PsbL, PsbM, PsbT, PsbX, Psb30/Ycf12, peripheral proteins PsbO, CyanoQ (PsbQ), PsbU, PsbV and a large number of cofactors. It forms dimeric complexes.

It localises to the cell inner membrane. In terms of biological role, involved in the binding and/or turnover of quinones at the Q(B) site of photosystem II (PSII). PSII is a light-driven water plastoquinone oxidoreductase, using light energy to abstract electrons from H(2)O, generating a proton gradient subsequently used for ATP formation. In Gloeobacter violaceus (strain ATCC 29082 / PCC 7421), this protein is Photosystem II reaction center protein X.